We begin with the raw amino-acid sequence, 333 residues long: 4-hydroxyproline epimerase (333 aa).

Catalysis depends on Cys90, which acts as the Proton acceptor. Substrate is bound by residues 91–92 and Asp249; that span reads GH. Catalysis depends on Cys253, which acts as the Proton donor. Substrate is bound at residue 254-255; that stretch reads GT.

This sequence belongs to the proline racemase family. As to quaternary structure, homodimer.

It catalyses the reaction trans-4-hydroxy-L-proline = cis-4-hydroxy-D-proline. Inhibited by iodoacetate, iodoacetamide and by high amounts (10 mM) of pyrrole-2-carboxylic acid (PYC). Not inhibited by PYC at 1 mM. In terms of biological role, allows intracellular utilization of 4-hydroxyproline, one of the major constituents of host collagen, by converting 4-hydroxy-L-proline to 4-hydroxy-D-proline, which can be further metabolized by intracellular 4-hydroxy-D-proline oxidases. Strong B-cell mitogen. Plays an important role in the regulation of intra- and extracellular amino acid pools, allowing the bacterium to profit from host precursors and enzymatic pathways. The chain is 4-hydroxyproline epimerase from Brucella melitensis biotype 1 (strain ATCC 23456 / CCUG 17765 / NCTC 10094 / 16M).